Reading from the N-terminus, the 273-residue chain is NAD-dependent protein deacetylase 2 (273 aa).

The 273-residue stretch at 1 to 273 folds into the Deacetylase sirtuin-type domain; the sequence is MSNAPLANQS…RCEAALAFLL (273 aa). Residues 26–46 and 104–107 each bind NAD(+); these read GAGCSTNSGIPDYRDSHGNWK and QNVD. The Proton acceptor role is filled by His-122. Residues Cys-130, Cys-133, Cys-181, and Cys-184 each coordinate Zn(2+). NAD(+) contacts are provided by residues 221–223, 247–249, and Cys-265; these read GSS and NLG.

This sequence belongs to the sirtuin family. Class II subfamily. Zn(2+) serves as cofactor.

Its subcellular location is the cytoplasm. The enzyme catalyses N(6)-acetyl-L-lysyl-[protein] + NAD(+) + H2O = 2''-O-acetyl-ADP-D-ribose + nicotinamide + L-lysyl-[protein]. In terms of biological role, NAD-dependent protein deacetylase which modulates the activities of several enzymes which are inactive in their acetylated form. This chain is NAD-dependent protein deacetylase 2, found in Bradyrhizobium diazoefficiens (strain JCM 10833 / BCRC 13528 / IAM 13628 / NBRC 14792 / USDA 110).